A 300-amino-acid chain; its full sequence is Cation-efflux pump FieF (300 aa).

Residues 24 to 44 (LLIKIFAWWYTGSVSILAALV) form a helical membrane-spanning segment. The Zn(2+) site is built by D45 and D49. 2 helical membrane passes run 82–102 (AALAQSMFISGSALFLFLTSI) and 114–134 (PGVGIGVTVIALICTIILVTF). Zn(2+) contacts are provided by H153 and D157. A run of 2 helical transmembrane segments spans residues 156–176 (SDVMMNGAILIALGLSWYGWH) and 178–198 (ADALFALGIGIYILYSALRMG).

Belongs to the cation diffusion facilitator (CDF) transporter (TC 2.A.4) family. FieF subfamily. As to quaternary structure, homodimer.

Its subcellular location is the cell inner membrane. The catalysed reaction is Zn(2+)(in) + H(+)(out) = Zn(2+)(out) + H(+)(in). The enzyme catalyses Cd(2+)(in) + H(+)(out) = Cd(2+)(out) + H(+)(in). It catalyses the reaction Fe(2+)(in) + H(+)(out) = Fe(2+)(out) + H(+)(in). Its function is as follows. Divalent metal cation transporter which exports Zn(2+), Cd(2+) and possibly Fe(2+). May be involved in zinc and iron detoxification by efflux. The chain is Cation-efflux pump FieF from Salmonella enteritidis PT4 (strain P125109).